Here is a 418-residue protein sequence, read N- to C-terminus: Creatine kinase U-type, mitochondrial (418 aa).

The N-terminal 39 residues, 1-39, are a transit peptide targeting the mitochondrion; sequence MAGPFSRLLSARPGLKLLALAGAGSLAAGILLRPESVRA. The segment at 40-64 is cardiolipin-binding; sequence ATGERRRLYPPSAEYPDLRKHNNCM. Positions 46-132 constitute a Phosphagen kinase N-terminal domain; that stretch reads RLYPPSAEYP…FDPVIQERHN (87 aa). A Phosphoserine modification is found at Ser-152. The Phosphagen kinase C-terminal domain occupies 159 to 401; that stretch reads YVLSSRVRTG…NYLIDCERRL (243 aa). An ATP-binding site is contributed by 162 to 166; sequence SSRVR. At Ser-197 the chain carries Phosphoserine. Thr-214 carries the post-translational modification Phosphothreonine. His-225 serves as a coordination point for ATP. Position 233 is a phosphoserine (Ser-233). ATP contacts are provided by residues Arg-270, Arg-326, 354–359, and Asp-369; that span reads RGTGGV. Thr-356 carries the post-translational modification Phosphothreonine.

The protein belongs to the ATP:guanido phosphotransferase family. Exists as an octamer composed of four MTCK homodimers. In terms of tissue distribution, in many tissues, with highest levels in brain gut and kidney. In the kidney localized primarily in the outer medulla in the thick ascending limb and distal convoluted tubule.

The protein resides in the mitochondrion inner membrane. It carries out the reaction creatine + ATP = N-phosphocreatine + ADP + H(+). Its function is as follows. Reversibly catalyzes the transfer of phosphate between ATP and various phosphogens (e.g. creatine phosphate). Creatine kinase isoenzymes play a central role in energy transduction in tissues with large, fluctuating energy demands, such as skeletal muscle, heart, brain and spermatozoa. The sequence is that of Creatine kinase U-type, mitochondrial (Ckmt1) from Rattus norvegicus (Rat).